A 73-amino-acid polypeptide reads, in one-letter code: Conotoxin MaI51 (73 aa).

Positions 1–19 (MQKLTILLLVAAVLLSTQA) are cleaved as a signal peptide. Residues 20–41 (LNQEKRPKEMINVLSKGKTNAE) constitute a propeptide that is removed on maturation. The residue at position 46 (Q46) is a Pyrrolidone carboxylic acid. Intrachain disulfides connect C47–C61, C54–C65, and C60–C69. I72 is modified (isoleucine amide).

Belongs to the conotoxin O2 superfamily. In terms of tissue distribution, expressed by the venom duct.

Its subcellular location is the secreted. The sequence is that of Conotoxin MaI51 from Conus marmoreus (Marble cone).